We begin with the raw amino-acid sequence, 158 residues long: N-alpha-acetyltransferase RimI (158 aa).

In terms of domain architecture, N-acetyltransferase spans 8-155 (VTIGALTRAD…DAYTMRRDSG (148 aa)).

This sequence belongs to the acetyltransferase family. RimI subfamily. Monomer. Interacts with TsaD. Interacts with GroS/GroES.

It carries out the reaction N-terminal L-methionyl-L-alanyl-[protein] + acetyl-CoA = N-terminal N(alpha)-acetyl-L-methionyl-L-alanyl-[protein] + CoA + H(+). The catalysed reaction is N-terminal L-methionyl-L-seryl-[protein] + acetyl-CoA = N-terminal N(alpha)-acetyl-L-methionyl-L-seryl-[protein] + CoA + H(+). The enzyme catalyses N-terminal L-methionyl-L-valyl-[protein] + acetyl-CoA = N-terminal N(alpha)-acetyl-L-methionyl-L-valyl-[protein] + CoA + H(+). It catalyses the reaction N-terminal L-methionyl-L-threonyl-[protein] + acetyl-CoA = N-terminal N(alpha)-acetyl-L-methionyl-L-threonyl-[protein] + CoA + H(+). It carries out the reaction N-terminal L-methionyl-L-lysyl-[protein] + acetyl-CoA = N-terminal N(alpha)-acetyl-L-methionyl-L-lysyl-[protein] + CoA + H(+). The catalysed reaction is N-terminal L-methionyl-L-leucyl-[protein] + acetyl-CoA = N-terminal N(alpha)-acetyl-L-methionyl-L-leucyl-[protein] + CoA + H(+). The enzyme catalyses N-terminal L-methionyl-L-phenylalanyl-[protein] + acetyl-CoA = N-terminal N(alpha)-acetyl-L-methionyl-L-phenylalanyl-[protein] + CoA + H(+). It catalyses the reaction N-terminal L-methionyl-L-tyrosyl-[protein] + acetyl-CoA = N-terminal N(alpha)-acetyl-L-methionyl-L-tyrosyl-[protein] + CoA + H(+). It carries out the reaction N-terminal glycyl-[protein] + acetyl-CoA = N-terminal N(alpha)-acetylglycyl-[protein] + CoA + H(+). The catalysed reaction is N-terminal L-alanyl-[protein] + acetyl-CoA = N-terminal N(alpha)-acetyl-L-alanyl-[protein] + CoA + H(+). The enzyme catalyses N-terminal L-seryl-[protein] + acetyl-CoA = N-terminal N(alpha)-acetyl-L-seryl-[protein] + CoA + H(+). It catalyses the reaction N-terminal L-valyl-[protein] + acetyl-CoA = N-terminal N(alpha)-acetyl-L-valyl-[protein] + CoA + H(+). It carries out the reaction N-terminal L-cysteinyl-[protein] + acetyl-CoA = N-terminal N(alpha)-acetyl-L-cysteinyl-[protein] + CoA + H(+). The catalysed reaction is N-terminal L-threonyl-[protein] + acetyl-CoA = N-terminal N(alpha)-acetyl-L-threonyl-[protein] + CoA + H(+). Its function is as follows. N-alpha-acetyltransferase that specifically mediates the acetylation of N-terminal residues. Able to mediate acetylation of a wide variety of N-terminal residues, with preference for hydrophobic N-termini. Acetylates GroS/GroES and GroEL1. Able to acetylate the ribosomal protein bS18, but it is unclear whether it acetylates its N-terminal alanine residue. This is N-alpha-acetyltransferase RimI from Mycobacterium tuberculosis (strain ATCC 25618 / H37Rv).